A 1073-amino-acid polypeptide reads, in one-letter code: DNA-directed RNA polymerase subunit beta (1073 aa).

It belongs to the RNA polymerase beta chain family. In terms of assembly, in plastids the minimal PEP RNA polymerase catalytic core is composed of four subunits: alpha, beta, beta', and beta''. When a (nuclear-encoded) sigma factor is associated with the core the holoenzyme is formed, which can initiate transcription.

It is found in the plastid. Its subcellular location is the chloroplast. It catalyses the reaction RNA(n) + a ribonucleoside 5'-triphosphate = RNA(n+1) + diphosphate. DNA-dependent RNA polymerase catalyzes the transcription of DNA into RNA using the four ribonucleoside triphosphates as substrates. This chain is DNA-directed RNA polymerase subunit beta, found in Aethionema grandiflorum (Persian stone-cress).